The primary structure comprises 161 residues: Allophycocyanin alpha-B chain (161 aa).

Asparagine 71 is subject to N4-methylasparagine. Residue cysteine 81 coordinates (2R,3E)-phycocyanobilin.

This sequence belongs to the phycobiliprotein family. In terms of processing, contains one covalently linked bilin chromophore.

The protein resides in the plastid. It localises to the chloroplast thylakoid membrane. Its function is as follows. Allophycocyanin is a photosynthetic bile pigment-protein complex with maximum absorption at approximately 650 nanometers. In Porphyra purpurea (Red seaweed), this protein is Allophycocyanin alpha-B chain (apcD).